Here is a 200-residue protein sequence, read N- to C-terminus: Coiled-coil domain-containing protein 85B (200 aa).

Positions 57-84 (LQGHLLEIRELKVINQRLQEENQELRDL) form a coiled coil. A compositionally biased stretch (low complexity) spans 178-188 (DGSSSTGSVGS). The segment at 178 to 200 (DGSSSTGSVGSPDQLHLVCSPDD) is disordered.

This sequence belongs to the CCDC85 family.

The protein resides in the nucleus. Its subcellular location is the cytoplasm. The protein localises to the cytoskeleton. It is found in the microtubule organizing center. It localises to the centrosome. The protein resides in the cell junction. Its subcellular location is the adherens junction. In terms of biological role, functions as a transcriptional repressor. May inhibit the activity of CTNNB1 in a TP53-dependent manner and thus regulate cell growth. May function in adipocyte differentiation, negatively regulating mitotic clonal expansion. Plays a role in cell-cell adhesion and epithelium development through its interaction with proteins of the beta-catenin family. The chain is Coiled-coil domain-containing protein 85B (ccdc85b) from Danio rerio (Zebrafish).